A 154-amino-acid chain; its full sequence is Troponin C, isoform 1 (154 aa).

EF-hand domains follow at residues Glu8 to Gln43, Leu44 to Glu79, Ala84 to Lys119, and Leu120 to Asp154. Ca(2+) contacts are provided by Asp57, Asp59, Ser61, Gln63, and Glu68. Asp133, Asp135, Ser137, Thr139, and Glu144 together coordinate Ca(2+).

It belongs to the troponin C family. In terms of tissue distribution, present only in adult muscles.

In Drosophila melanogaster (Fruit fly), this protein is Troponin C, isoform 1 (TpnC41C).